The chain runs to 131 residues: Profilin-8 (131 aa).

An intrachain disulfide couples Cys13 to Cys115. An Involved in PIP2 interaction motif is present at residues 81–97 (AVIRGKKGAGGITIKKT). The residue at position 111 (Thr111) is a Phosphothreonine.

It belongs to the profilin family. As to quaternary structure, occurs in many kinds of cells as a complex with monomeric actin in a 1:1 ratio. In terms of processing, phosphorylated by MAP kinases.

The protein localises to the cytoplasm. It localises to the cytoskeleton. Its function is as follows. Binds to actin and affects the structure of the cytoskeleton. At high concentrations, profilin prevents the polymerization of actin, whereas it enhances it at low concentrations. This is Profilin-8 from Olea europaea (Common olive).